Reading from the N-terminus, the 342-residue chain is N-acetyl-gamma-glutamyl-phosphate reductase (342 aa).

Cys147 is a catalytic residue.

It belongs to the NAGSA dehydrogenase family. Type 1 subfamily.

Its subcellular location is the cytoplasm. It catalyses the reaction N-acetyl-L-glutamate 5-semialdehyde + phosphate + NADP(+) = N-acetyl-L-glutamyl 5-phosphate + NADPH + H(+). It functions in the pathway amino-acid biosynthesis; L-arginine biosynthesis; N(2)-acetyl-L-ornithine from L-glutamate: step 3/4. Its function is as follows. Catalyzes the NADPH-dependent reduction of N-acetyl-5-glutamyl phosphate to yield N-acetyl-L-glutamate 5-semialdehyde. The protein is N-acetyl-gamma-glutamyl-phosphate reductase of Campylobacter jejuni subsp. jejuni serotype O:2 (strain ATCC 700819 / NCTC 11168).